The primary structure comprises 203 residues: Proteasome subunit beta 2 (203 aa).

Positions 1-9 (MGEEVQIGA) are cleaved as a propeptide — removed in mature form; by autocatalysis. T10 functions as the Nucleophile in the catalytic mechanism.

The protein belongs to the peptidase T1B family. As to quaternary structure, the 20S proteasome core is composed of 14 alpha and 14 beta subunits that assemble into four stacked heptameric rings, resulting in a barrel-shaped structure. The two inner rings, each composed of seven catalytic beta subunits, are sandwiched by two outer rings, each composed of seven alpha subunits. The catalytic chamber with the active sites is on the inside of the barrel. Has a gated structure, the ends of the cylinder being occluded by the N-termini of the alpha-subunits. Is capped at one or both ends by the proteasome regulatory ATPase, PAN.

It is found in the cytoplasm. It catalyses the reaction Cleavage of peptide bonds with very broad specificity.. The formation of the proteasomal ATPase PAN-20S proteasome complex, via the docking of the C-termini of PAN into the intersubunit pockets in the alpha-rings, triggers opening of the gate for substrate entry. Interconversion between the open-gate and close-gate conformations leads to a dynamic regulation of the 20S proteasome proteolysis activity. In terms of biological role, component of the proteasome core, a large protease complex with broad specificity involved in protein degradation. This chain is Proteasome subunit beta 2, found in Pyrobaculum aerophilum (strain ATCC 51768 / DSM 7523 / JCM 9630 / CIP 104966 / NBRC 100827 / IM2).